A 780-amino-acid chain; its full sequence is E3 SUMO-protein ligase gei-17 (780 aa).

Positions 181 to 210 (APLHSSFPNHGRSSQQSLQKSEKSNRPKKM) are disordered. Positions 203-367 (KSNRPKKMYA…AAGVYFVHRV (165 aa)) constitute a PINIT domain. The SP-RING-type zinc-finger motif lies at 400 to 485 (GEDDIAMDRL…LAKVDKNTTE (86 aa)). Residues Cys-431, His-433, Cys-454, and Cys-457 each coordinate Zn(2+). Residues 519 to 530 (GTASCSSTNGNG) are compositionally biased toward polar residues. 3 disordered regions span residues 519–544 (GTAS…ADDD), 560–594 (IMNS…KTKD), and 732–755 (QQHH…SFYA). A compositionally biased stretch (low complexity) spans 732 to 749 (QQHHLQQQQQQQQSPQIM).

It belongs to the PIAS family. In terms of assembly, may interact with gex-3.

It participates in protein modification; protein sumoylation. Functionally, functions as an E3-type smo-1 ligase. Mediates smo-1 conjugation to air-2 in vitro and is required for proper chromosome alignment. In the early embryo, specifically suppresses checkpoint activation in response to DNA damage, maybe by promoting mus-101 sumoylation. In embryos, plays a role in determining telomere localization in the nucleus. Acts with pie-1 to promote piRNA-mediated silencing and fertility in the adult germline. This chain is E3 SUMO-protein ligase gei-17, found in Caenorhabditis elegans.